We begin with the raw amino-acid sequence, 289 residues long: Early E1A protein (289 aa).

The interaction with RB1 in competition with E2F1 stretch occupies residues 41 to 49 (PTLHELYDL). The interval 76–140 (EGIDLLTFPP…PSDDEDEEGE (65 aa)) is interaction with UBE2I. A disordered region spans residues 82 to 107 (TFPPAPGSPEPPHLSRQPEQPEQRAL). A compositionally biased stretch (pro residues) spans 84 to 93 (PPAPGSPEPP). Residue Ser-89 is modified to Phosphoserine; by host. A PXLXP motif, interaction with host ZMYND11 motif is present at residues 113–117 (PNLVP). Residues 122-126 (LTCHE) carry the LXCXE motif, interaction with host RB1 and TMEM173/STING motif. A zinc finger lies at 154–174 (CRSCHYHRRNTGDPDIMCSLC). The disordered stretch occupies residues 187-245 (VSEPEPEPEPEPEPARPTRRPKLVPAILRRPTSPVSRECNSSTDSCDSGPSNTPPEIHP). Residues Ser-219 and Ser-231 each carry the phosphoserine; by host modification. Positions 219 to 237 (SPVSRECNSSTDSCDSGPS) are enriched in polar residues. The short motif at 258–289 (RVGGRRQAVECIEDLLNESGQPLDLSCKRPRP) is the Bipartite nuclear localization signal element. The PXDLS motif, CTBP-binding motif lies at 279-283 (PLDLS).

It belongs to the adenoviridae E1A protein family. Interacts with host UBE2I; this interaction interferes with polySUMOylation. Interacts with host RB1; this interaction induces the aberrant dissociation of RB1-E2F1 complex thereby disrupting the activity of RB1 and activating E2F1-regulated genes. Interacts with host ATF7; the interaction enhances ATF7-mediated viral transactivation activity which requires the zinc binding domains of both proteins. Isoform early E1A 32 kDa protein and isoform early E1A 26 kDa protein interact (via N-terminus) with CUL1 and E3 ubiquitin ligase RBX1; these interactions inhibit RBX1-CUL1-dependent elongation reaction of ubiquitin chains and attenuate ubiquitination of SCF(FBXW7) target proteins. Interacts (via PXLXP motif) with host ZMYND11/BS69 (via MYND-type zinc finger); this interaction inhibits E1A mediated transactivation. Interacts with host EP300; this interaction stimulates the acetylation of RB1 by recruiting EP300 and RB1 into a multimeric-protein complex. Interacts with host CTBP1 and CTBP2; this interaction seems to potentiate viral replication. Interacts with host DCAF7. Interacts with host DYRK1A. Interacts with host KPNA4; this interaction allows E1A import into the host nucleus. Interacts with host EP400; this interaction stabilizes MYC. Interacts (via LXCXE motif) with host TMEM173/STING; this interaction impairs the ability of TMEM173/STING to sense cytosolic DNA and promote the production of type I interferon (IFN-alpha and IFN-beta). Interacts (via C-terminus) with host ZBED1/hDREF (via C-terminus); the interaction is direct.

It localises to the host nucleus. Plays a role in viral genome replication by driving entry of quiescent cells into the cell cycle. Stimulation of progression from G1 to S phase allows the virus to efficiently use the cellular DNA replicating machinery to achieve viral genome replication. E1A protein has both transforming and trans-activating activities. Induces the disassembly of the E2F1 transcription factor from RB1 by direct competition for the same binding site on RB1, with subsequent transcriptional activation of E2F1-regulated S-phase genes and of the E2 region of the adenoviral genome. Release of E2F1 leads to the ARF-mediated inhibition of MDM2 and causes TP53/p53 to accumulate because it is not targeted for degradation by MDM2-mediated ubiquitination anymore. This increase in TP53, in turn, would arrest the cell proliferation and direct its death but this effect is counteracted by the viral protein E1B-55K. Inactivation of the ability of RB1 to arrest the cell cycle is critical for cellular transformation, uncontrolled cellular growth and proliferation induced by viral infection. Interaction with RBX1 and CUL1 inhibits ubiquitination of the proteins targeted by SCF(FBXW7) ubiquitin ligase complex, and may be linked to unregulated host cell proliferation. The tumorigenesis-restraining activity of E1A may be related to the disruption of the host CtBP-CtIP complex through the CtBP binding motif. Interacts with host TBP protein; this interaction probably disrupts the TBP-TATA complex. Interaction with host TMEM173/STING impairs the ability of TMEM173/STING to sense cytosolic DNA and promote the production of type I interferon (IFN-alpha and IFN-beta). Promotes the sumoylation of host ZBED1/hDREF with SUMO1. The chain is Early E1A protein from Homo sapiens (Human).